The sequence spans 348 residues: High mobility group protein 20A (348 aa).

Disordered stretches follow at residues Met-1 to Phe-114 and Ser-181 to Glu-213. Polar residues-rich tracts occupy residues Ser-34–Asn-47 and Ser-56–Asn-71. Positions Thr-72 to Arg-82 are enriched in basic and acidic residues. Residues Thr-83–Pro-97 show a composition bias toward basic residues. Positions Pro-104–Gln-172 form a DNA-binding region, HMG box. The segment covering Lys-183–Glu-213 has biased composition (basic and acidic residues). Residues Ser-230–Gln-274 are a coiled coil.

It is found in the nucleus. In terms of biological role, plays a role in neuronal differentiation. This chain is High mobility group protein 20A (HMG20A), found in Gallus gallus (Chicken).